Consider the following 444-residue polypeptide: NADH-dependent flavin oxidoreductase nadA (444 aa).

FMN-binding positions include 37–40 (ERMC) and glutamine 123. Residues 127-149 (PGRQTPSHRQPEPISASDVPLDT) form a disordered region. Substrate is bound at residue 192-195 (HAAH). An FMN-binding site is contributed by 345-346 (AR).

It belongs to the NADH:flavin oxidoreductase/NADH oxidase family.

It localises to the cytoplasm. Its subcellular location is the cytosol. In terms of biological role, NADH-dependent flavin oxidoreductase; part of the gene cluster that mediates the biosynthesis of aflatoxins, a group of polyketide-derived furanocoumarins, and part of the most toxic and carcinogenic compounds among the known mycotoxins. The four major aflatoxins produced by A.parasiticus are aflatoxin B1 (AFB1), aflatoxin B2 (AFB2), aflatoxin G1 (AFG1) and aflatoxin G2 (AFG2). Within the aflatoxin pathway, the NADH-dependent flavin oxidoreductase nadA is specifically required for the last steps in which OMST is converted specifically to aflatoxin G1. The biosynthesis of aflatoxins begins with the norsolorinic acid synthase aflC that combines a hexanoyl starter unit produced by the fatty acid synthase aflA/aflB and 7 malonyl-CoA extender units to synthesize the precursor NOR. The second step is the conversion of NOR to averantin and requires the norsolorinic acid ketoreductase aflD, which catalyzes the dehydration of norsolorinic acid to form (1'S)-averantin. The norsolorinic acid reductases aflE and aflF may also play a role in the conversion of NOR to AVN. The cytochrome P450 monooxygenase aflG then catalyzes the hydroxylation of AVN to 5'hydroxyaverantin (HAVN). The next step is performed by the 5'-hydroxyaverantin dehydrogenase aflH that transforms HAVN to 5'-oxoaverantin (OAVN) which is further converted to averufin (AVF) by aflK that plays a dual role in the pathway, as a 5'-oxoaverantin cyclase that mediates conversion of 5'-oxoaverantin, as well as a versicolorin B synthase in a later step in the pathway. The averufin oxidase aflI catalyzes the conversion of AVF to versiconal hemiacetal acetate (VHA). VHA is then the substrate for the versiconal hemiacetal acetate esterase aflJ to yield versiconal (VAL). Versicolorin B synthase aflK then converts VAL to versicolorin B (VERB) by closing the bisfuran ring of aflatoxin which is required for DNA-binding, thus giving to aflatoxin its activity as a mutagen. Then, the activity of the versicolorin B desaturase aflL leads to versicolorin A (VERA). A branch point starts from VERB since it can also be converted to dihydrodemethylsterigmatocystin (DMDHST), probably also by aflL, VERA being a precursor for aflatoxins B1 and G1, and DMDHST for aflatoxins B2 and G2. Next, the versicolorin reductase aflM and the cytochrome P450 monooxygenase aflN are involved in conversion of VERA to demethylsterigmatocystin (DMST). AflX and aflY seem also involved in this step, through probable aflX-mediated epoxide ring-opening step following versicolorin A oxidation and aflY-mediated Baeyer-Villiger oxidation required for the formation of the xanthone ring. The methyltransferase aflO then leads to the modification of DMST to sterigmatocystin (ST), and of DMDHST to dihydrosterigmatocystin (DHST). Both ST and DHST are then substrates of the O-methyltransferase aflP to yield O-methylsterigmatocystin (OMST) and dihydro-O-methylsterigmatocystin (DHOMST), respectively. Finally OMST is converted to aflatoxins B1 and G1, and DHOMST to aflatoxins B2 and G2, via the action of several enzymes including O-methylsterigmatocystin oxidoreductase aflQ, the cytochrome P450 monooxygenase aflU, but also the NADH-dependent flavin oxidoreductase nadA which is specifically required for the synthesis of AFG1. This chain is NADH-dependent flavin oxidoreductase nadA, found in Aspergillus parasiticus (strain ATCC 56775 / NRRL 5862 / SRRC 143 / SU-1).